A 354-amino-acid polypeptide reads, in one-letter code: Clavesin-1 (354 aa).

In terms of domain architecture, CRAL-TRIO spans 118–279 (IKRALIDGFP…EFGGTLPPYD (162 aa)). The interval 333 to 354 (AGTLKHEEKGENENTQPLLALD) is disordered. The span at 335–344 (TLKHEEKGEN) shows a compositional bias: basic and acidic residues. The segment covering 345–354 (ENTQPLLALD) has biased composition (polar residues).

As to quaternary structure, forms a complex with clathrin heavy chain and gamma-adaptin.

It is found in the golgi apparatus. It localises to the trans-Golgi network membrane. The protein localises to the early endosome membrane. The protein resides in the cytoplasmic vesicle. Its subcellular location is the clathrin-coated vesicle. Functionally, required for normal morphology of late endosomes and/or lysosomes in neurons. Binds phosphatidylinositol 3,5-bisphosphate (PtdIns(3,5)P2). The sequence is that of Clavesin-1 (CLVS1) from Pongo abelii (Sumatran orangutan).